Consider the following 271-residue polypeptide: UPF0328 protein ECU09_0020 (271 aa).

Belongs to the UPF0328 family.

The polypeptide is UPF0328 protein ECU09_0020 (Encephalitozoon cuniculi (strain GB-M1) (Microsporidian parasite)).